The primary structure comprises 395 residues: S-adenosylmethionine synthase (395 aa).

Position 15 (His-15) interacts with ATP. Position 17 (Asp-17) interacts with Mg(2+). Glu-43 is a binding site for K(+). Residues Glu-56 and Gln-99 each contribute to the L-methionine site. Positions 99–109 (QSPEIAQGVDR) are flexible loop. ATP contacts are provided by residues 164–166 (DAK), 230–231 (RF), Asp-239, 245–246 (RK), Ala-262, and Lys-266. Asp-239 serves as a coordination point for L-methionine. Lys-270 is an L-methionine binding site.

Belongs to the AdoMet synthase family. In terms of assembly, homotetramer; dimer of dimers. Mg(2+) serves as cofactor. It depends on K(+) as a cofactor.

It localises to the cytoplasm. The enzyme catalyses L-methionine + ATP + H2O = S-adenosyl-L-methionine + phosphate + diphosphate. It participates in amino-acid biosynthesis; S-adenosyl-L-methionine biosynthesis; S-adenosyl-L-methionine from L-methionine: step 1/1. Its function is as follows. Catalyzes the formation of S-adenosylmethionine (AdoMet) from methionine and ATP. The overall synthetic reaction is composed of two sequential steps, AdoMet formation and the subsequent tripolyphosphate hydrolysis which occurs prior to release of AdoMet from the enzyme. This is S-adenosylmethionine synthase from Colwellia psychrerythraea (strain 34H / ATCC BAA-681) (Vibrio psychroerythus).